Here is a 314-residue protein sequence, read N- to C-terminus: Dihydroorotate dehydrogenase (fumarate) (314 aa).

Residues K46, 70–74 (NSMGL), and N130 contribute to the substrate site. An FMN-binding site is contributed by 46–47 (KS). N130 lines the FMN pocket. Catalysis depends on nucleophile residues S132 and C133. 2 residues coordinate FMN: K167 and I195. 196–197 (NS) contributes to the substrate binding site. Residues G224, 252 to 253 (GG), and 274 to 275 (GT) contribute to the FMN site.

It belongs to the dihydroorotate dehydrogenase family. Type 1 subfamily. Homodimer. The cofactor is FMN.

Its subcellular location is the cytoplasm. It catalyses the reaction (S)-dihydroorotate + fumarate = orotate + succinate. Its pathway is pyrimidine metabolism; UMP biosynthesis via de novo pathway. Functionally, catalyzes the conversion of dihydroorotate to orotate with fumarate as the electron acceptor. This chain is Dihydroorotate dehydrogenase (fumarate) (URA1), found in Saccharomyces bayanus (Yeast).